The primary structure comprises 488 residues: PTS system mannitol-specific EIICB component (488 aa).

Residues 1–26 (MRKKLAKVKVHIQSLDSLLSSMTMPI) lie on the Cytoplasmic side of the membrane. A PTS EIIC type-2 domain is found at 15–362 (LDSLLSSMTM…LSLTRKKQLK (348 aa)). Residues 27-48 (IGIFIAWGLLASFFIPSGWTPD) traverse the membrane as a helical segment. Residues 49–52 (KNLA) lie on the Extracellular side of the membrane. Residues 53–73 (LMVGIGIQYVIPTIIXFFGGK) traverse the membrane as a helical segment. At 74 to 147 (KIYEIRGGVI…SGFEMLVNNF (74 aa)) the chain is on the cytoplasmic side. Residues 148–169 (YLGFLGFALIFPSFYLSIYLIG) form a helical membrane-spanning segment. Residues 170-178 (YIQLGLKLL) are Extracellular-facing. A helical membrane pass occupies residues 179–199 (VEIMQQYKLYPIAAIVIEPAK). Residues 200 to 289 (VLFLNNAINH…VLLKPVLILA (90 aa)) lie on the Cytoplasmic side of the membrane. The chain crosses the membrane as a helical span at residues 290–309 (TIAVGVVGNGILQIFNAGTI). The Extracellular portion of the chain corresponds to 310–331 (APVSPGSVIAGFLQINKTPLDV). Residues 332–353 (AGYALALVLSAVTSLLISLLLL) form a helical membrane-spanning segment. Topologically, residues 354–488 (SLTRKKQLKT…IIEKIKNEKN (135 aa)) are cytoplasmic. In terms of domain architecture, PTS EIIB type-2 spans 397 to 488 (SQVTFVCDAG…IIEKIKNEKN (92 aa)). The active-site Phosphocysteine intermediate; for EIIB activity is the Cys403. A Phosphocysteine; by EIIA modification is found at Cys403.

In terms of assembly, homodimer.

Its subcellular location is the cell membrane. The catalysed reaction is D-mannitol(out) + N(pros)-phospho-L-histidyl-[protein] = D-mannitol 1-phosphate(in) + L-histidyl-[protein]. In terms of biological role, the phosphoenolpyruvate-dependent sugar phosphotransferase system (sugar PTS), a major carbohydrate active transport system, catalyzes the phosphorylation of incoming sugar substrates concomitantly with their translocation across the cell membrane. The enzyme II CmtAB PTS system is involved in D-mannitol transport. This Mycoplasma pneumoniae (strain ATCC 29342 / M129 / Subtype 1) (Mycoplasmoides pneumoniae) protein is PTS system mannitol-specific EIICB component (mtlA).